A 507-amino-acid chain; its full sequence is Pyridoxine 4-oxidase (507 aa).

Residue His-448 is the Proton acceptor of the active site.

It belongs to the GMC oxidoreductase family. Monomer. FAD is required as a cofactor.

It catalyses the reaction pyridoxine + O2 = pyridoxal + H2O2. It functions in the pathway cofactor degradation; B6 vitamer degradation; pyridoxal from pyridoxine (oxidase route): step 1/1. This chain is Pyridoxine 4-oxidase (pno), found in Microbacterium luteolum (Aureobacterium luteolum).